Here is a 147-residue protein sequence, read N- to C-terminus: Hemoglobin subunit epsilon (147 aa).

One can recognise a Globin domain in the interval His3–His147. A phosphoserine mark is found at Ser14 and Ser51. 2 residues coordinate heme b: His64 and His93.

Belongs to the globin family. In terms of assembly, heterotetramer of two alpha chains and two epsilon chains in early embryonic hemoglobin Gower-2; two zeta chains and two epsilon chains in early embryonic hemoglobin Gower-1. As to expression, red blood cells.

The epsilon chain is a beta-type chain of early mammalian embryonic hemoglobin. The protein is Hemoglobin subunit epsilon (HBE1) of Lagothrix lagotricha (Brown woolly monkey).